Reading from the N-terminus, the 91-residue chain is Probable Fe(2+)-trafficking protein (91 aa).

This sequence belongs to the Fe(2+)-trafficking protein family. In terms of assembly, monomer.

Could be a mediator in iron transactions between iron acquisition and iron-requiring processes, such as synthesis and/or repair of Fe-S clusters in biosynthetic enzymes. The polypeptide is Probable Fe(2+)-trafficking protein (Klebsiella pneumoniae (strain 342)).